Here is a 283-residue protein sequence, read N- to C-terminus: Tetraspanin-33 (283 aa).

Residues M1–Y24 lie on the Cytoplasmic side of the membrane. A helical membrane pass occupies residues L25–V45. At Y46–P64 the chain is on the extracellular side. Residues A65–G85 form a helical membrane-spanning segment. At S86–T96 the chain is on the cytoplasmic side. Residues F97–V117 form a helical membrane-spanning segment. The Extracellular segment spans residues F118 to N235. Intrachain disulfides connect C156-C224, C157-C189, C173-C183, and C190-C203. A glycan (N-linked (GlcNAc...) asparagine) is linked at N172. A helical transmembrane segment spans residues L236–L256. Residues S257–Y283 lie on the Cytoplasmic side of the membrane.

The protein belongs to the tetraspanin (TM4SF) family. In terms of assembly, homodimer; disulfide-linked. Interacts (via extracellular domain) with ADAM10 (via extracellular domain). Interacts (via cytoplasmic domain) with PLEKHA7 (via WW domains); the interaction is dependent on PDZD11 being bound to PLEKHA7 and facilitates the docking of ADAM10 to zonula adherens.

Its subcellular location is the cell membrane. The protein localises to the cell junction. It localises to the adherens junction. The protein resides in the cytoplasm. In terms of biological role, part of TspanC8 subgroup, composed of 6 members that interact with the transmembrane metalloprotease ADAM10. This interaction is required for ADAM10 exit from the endoplasmic reticulum and for enzymatic maturation and trafficking to the cell surface as well as substrate specificity. Different TspanC8/ADAM10 complexes have distinct substrates. Plays an important role in normal erythropoiesis. It has a role in the differentiation of erythroid progenitors. Negatively regulates ligand-induced Notch activity probably by regulating ADAM10 activity. Mediates docking of ADAM10 to zonula adherens by interacting with ADAM10 and, in a PDZD11-dependent manner, with the zonula adherens protein PLEKHA7. The chain is Tetraspanin-33 (TSPAN33) from Bos taurus (Bovine).